The sequence spans 918 residues: Aconitase-ribosomal protein bL21m fusion protein (918 aa).

A mitochondrion-targeting transit peptide spans 1 to 30 (MATFARMKLCLSGSSQAIPSKGISLVAARF). The interval 31 to 811 (QSTASRASYV…IDSIKQQPDH (781 aa)) is homocitrate dehydratase, mitochondrial. Substrate contacts are provided by residues glutamine 105 and 198–200 (DSH). 3 residues coordinate [4Fe-4S] cluster: cysteine 394, cysteine 457, and cysteine 460. Substrate is bound by residues arginine 484, arginine 489, lysine 619, and 680–681 (AR). Residues 812–918 (YADAYIFNRH…ILRVTELKLN (107 aa)) form a large ribosomal subunit protein bL21m region.

This sequence in the N-terminal section; belongs to the aconitase/IPM isomerase family. In the C-terminal section; belongs to the bacterial ribosomal protein bL21 family. As to quaternary structure, component of the mitochondrial large ribosomal subunit (mt-LSU). Mature yeast 74S mitochondrial ribosomes consist of a small (37S) and a large (54S) subunit. The 37S small subunit contains a 15S ribosomal RNA (15S mt-rRNA) and at least 32 different proteins. The 54S large subunit contains a 21S rRNA (21S mt-rRNA) and at least 45 different proteins. [4Fe-4S] cluster serves as cofactor.

The protein resides in the mitochondrion. Its subcellular location is the nucleus. The enzyme catalyses (2R)-homocitrate = cis-homoaconitate + H2O. It participates in amino-acid biosynthesis; L-lysine biosynthesis via AAA pathway; L-alpha-aminoadipate from 2-oxoglutarate: step 2/5. In terms of biological role, catalyzes the reversible dehydration of (R)-homocitrate to cis-homoaconitate, a step in the alpha-aminoadipate pathway for lysine biosynthesis. Component of the mitochondrial ribosome (mitoribosome), a dedicated translation machinery responsible for the synthesis of mitochondrial genome-encoded proteins, including at least some of the essential transmembrane subunits of the mitochondrial respiratory chain. The mitoribosomes are attached to the mitochondrial inner membrane and translation products are cotranslationally integrated into the membrane. The sequence is that of Aconitase-ribosomal protein bL21m fusion protein (aco2) from Schizosaccharomyces pombe (strain 972 / ATCC 24843) (Fission yeast).